The primary structure comprises 179 residues: MSLKQRYRETIQPKLLKDLSLSNIHEVPKVLKITVNRGLGEAAQNAKSLEASITELATITGQKVVVTRAKKAIAGFKIRQGMPIGCAVTLRGERMYAFLERLINLALPRIRDFRGVSPKSFDGRGNYTLGVREQLIFPEVSFDKIDAIRGMDITIVTSARTDEEGQSLLREMGMPFRSN.

Belongs to the universal ribosomal protein uL5 family. As to quaternary structure, part of the 50S ribosomal subunit; part of the 5S rRNA/L5/L18/L25 subcomplex. Contacts the 5S rRNA and the P site tRNA. Forms a bridge to the 30S subunit in the 70S ribosome.

This is one of the proteins that bind and probably mediate the attachment of the 5S RNA into the large ribosomal subunit, where it forms part of the central protuberance. In the 70S ribosome it contacts protein S13 of the 30S subunit (bridge B1b), connecting the 2 subunits; this bridge is implicated in subunit movement. Contacts the P site tRNA; the 5S rRNA and some of its associated proteins might help stabilize positioning of ribosome-bound tRNAs. The chain is Large ribosomal subunit protein uL5 from Prochlorococcus marinus (strain MIT 9303).